An 803-amino-acid chain; its full sequence is E3 ubiquitin-protein ligase UHRF2 (803 aa).

The 78-residue stretch at 1 to 78 (MWIQVRTIDG…IQLLVRPDSS (78 aa)) folds into the Ubiquitin-like domain. 4 stretches are compositionally biased toward polar residues: residues 79–96 (LPSTSKQNDAQVKPSSHN), 106–115 (GGSSSQPSTS), 167–181 (KNGSSYKRTNGNVNH), and 189–200 (KLDNVPSTSNSD). Disordered stretches follow at residues 79–115 (LPSTSKQNDAQVKPSSHNPPKVKKTARGGSSSQPSTS) and 154–200 (RASD…SNSD). The required for interaction with histone H3 stretch occupies residues 118 to 312 (TCLIDPGFGL…VDEIFKIEKP (195 aa)). The segment at 195-289 (STSNSDSVAA…KEVRVKVFLG (95 aa)) is interaction with PCNP. The PHD-type zinc finger occupies 340 to 396 (DKTCHMCSCHKCGEKRDPNMQLLCDECNMAYHIYCLSPPLDKVPEEEYWYCPSCKTD). Positions 415–645 (KMPSASTESR…LQYPAGYPSE (231 aa)) are methyl-CpG binding and interaction with HDAC1. The YDG domain maps to 449–613 (GPIPGIPVGS…FLVWRYLLRR (165 aa)). The interval 643 to 676 (PSEKEGKKTKGQSKKQGSEATKRPASDDECPGDS) is disordered. Over residues 658–668 (QGSEATKRPAS) the composition is skewed to basic and acidic residues. A Phosphoserine modification is found at Ser-668. Residues 734 to 773 (CVCCQELVYQPVTTECFHNVCKDCLQRSFKAQVFSCPACR) form an RING-type zinc finger.

Homodimer; disulfide-linked. Binds methylated CpG containing oligonucleotides. Interacts with H3; the interaction has a preference for the 'Lys-9' trimethylated form of H3 (H3K9me3). Interacts with PCNP. Interacts with HDAC1. Interacts directly with CCNE1; the interaction ubiquitinates CCNE1 and appears independent of CCNE1 phosphorylation. Interacts with CCND1; the interaction ubiquitinates CCND1 and appears independent of CCND1 phosphorylation. Interacts with p53/TP53 and RB1. Interacts with UBE2I. Interacts with ZNF618. Interacts with UHRF1. Interacts with FANCD2. Interacts with ATR. Interacts with PCNA. Post-translationally, may be autoubiquitinated; which may lead to proteasomal degradation. In terms of processing, phosphorylated. Phosphorylation may be mediated by CDK2. Autosumoylated. As to expression, mostly detected in several tissues, including the thymus, spleen, lung, adrenal gland, and ovary. In addition, found in several tissues in the brain (cerebellum, hippocampus, and cerebral cortex).

It localises to the nucleus. Its subcellular location is the chromosome. It carries out the reaction S-ubiquitinyl-[E2 ubiquitin-conjugating enzyme]-L-cysteine + [acceptor protein]-L-lysine = [E2 ubiquitin-conjugating enzyme]-L-cysteine + N(6)-ubiquitinyl-[acceptor protein]-L-lysine.. Its pathway is protein modification; protein ubiquitination. With respect to regulation, E3 ligase activity is robustly activated by 5-hydroxy-methylcytosine. Functionally, E3 ubiquitin ligase that plays important roles in DNA methylation, histone modifications, cell cycle and DNA repair. Acts as a specific reader for 5-hydroxymethylcytosine (5hmC) and thereby recruits various substrates to these sites to ubiquitinate them. This activity also allows the maintenance of 5mC levels at specific genomic loci and regulates neuron-related gene expression. Participates in cell cycle regulation by ubiquitinating cyclins CCND1 and CCNE1 and thus inducing G1 arrest. Also ubiquitinates PCNP leading to its degradation by the proteasome. Plays an active role in DNA damage repair by ubiquitinating p21/CDKN1A leading to its proteasomal degradation. Also promotes DNA repair by acting as an interstrand cross-links (ICLs) sensor. Mechanistically, cooperates with UHRF1 to ensure recruitment of FANCD2 to ICLs, leading to FANCD2 monoubiquitination and subsequent activation. Contributes to UV-induced DNA damage response by physically interacting with ATR in response to irradiation, thereby promoting ATR activation. This is E3 ubiquitin-protein ligase UHRF2 (Uhrf2) from Mus musculus (Mouse).